Reading from the N-terminus, the 221-residue chain is U1 small nuclear ribonucleoprotein C (221 aa).

The Matrin-type zinc-finger motif lies at 4–36; that stretch reads YFCDYCDTYLTHDSPSVRKTHCNGRKHKENVRV. Positions 100 to 168 are disordered; that stretch reads SNPFPTSQAG…PPGAPTLPQP (69 aa). Residues 134-166 show a composition bias toward pro residues; that stretch reads APAPPRMPGPLLMTPPPGAAAPGMAPPGAPTLP.

It belongs to the U1 small nuclear ribonucleoprotein C family. U1 snRNP is composed of the 7 core Sm proteins B/B', D1, D2, D3, E, F and G that assemble in a heptameric protein ring on the Sm site of the small nuclear RNA to form the core snRNP, and at least 3 U1 snRNP-specific proteins U1-70K, U1-A and U1-C. U1-C interacts with U1 snRNA and the 5' splice-site region of the pre-mRNA.

It is found in the nucleus. Component of the spliceosomal U1 snRNP, which is essential for recognition of the pre-mRNA 5' splice-site and the subsequent assembly of the spliceosome. U1-C is directly involved in initial 5' splice-site recognition for both constitutive and regulated alternative splicing. The interaction with the 5' splice-site seems to precede base-pairing between the pre-mRNA and the U1 snRNA. Stimulates commitment or early (E) complex formation by stabilizing the base pairing of the 5' end of the U1 snRNA and the 5' splice-site region. The protein is U1 small nuclear ribonucleoprotein C of Branchiostoma floridae (Florida lancelet).